The following is a 139-amino-acid chain: Ribulose bisphosphate carboxylase small subunit (139 aa).

The protein belongs to the RuBisCO small chain family. In terms of assembly, heterohexadecamer of 8 large and 8 small subunits.

It localises to the plastid. It is found in the chloroplast. Functionally, ruBisCO catalyzes two reactions: the carboxylation of D-ribulose 1,5-bisphosphate, the primary event in carbon dioxide fixation, as well as the oxidative fragmentation of the pentose substrate in the photorespiration process. Both reactions occur simultaneously and in competition at the same active site. Although the small subunit is not catalytic it is essential for maximal activity. This Trieres chinensis (Marine centric diatom) protein is Ribulose bisphosphate carboxylase small subunit.